The sequence spans 136 residues: Small ribosomal subunit protein uS19 (136 aa).

The protein belongs to the universal ribosomal protein uS19 family.

Protein S19 forms a complex with S13 that binds strongly to the 16S ribosomal RNA. This chain is Small ribosomal subunit protein uS19 (rps19), found in Methanothermobacter thermautotrophicus (strain ATCC 29096 / DSM 1053 / JCM 10044 / NBRC 100330 / Delta H) (Methanobacterium thermoautotrophicum).